The chain runs to 652 residues: Carboxypeptidase S1 homolog A (652 aa).

An N-terminal signal peptide occupies residues 1-19 (MRFAASIAVALPVIHAASA). A disulfide bridge links Cys50 with Cys121. 6 N-linked (GlcNAc...) asparagine glycosylation sites follow: Asn77, Asn132, Asn161, Asn168, Asn184, and Asn202. Residue Ser238 is part of the active site. N-linked (GlcNAc...) asparagine glycans are attached at residues Asn260, Asn299, Asn347, and Asn410. Disulfide bonds link Cys325–Cys361 and Cys332–Cys354. Asp458 is an active-site residue. Residue Cys461 coordinates substrate. 3 N-linked (GlcNAc...) asparagine glycosylation sites follow: Asn474, Asn492, and Asn505. His516 is a catalytic residue. Glu517 provides a ligand contact to substrate. The interval 608 to 627 (AASKGNPPPTTTSSPTAAPT) is disordered. Low complexity predominate over residues 618 to 627 (TTSSPTAAPT). Gly629 is lipidated: GPI-anchor amidated glycine. Positions 630–652 (SAMLKAPVAMLAISALTVLAFFL) are cleaved as a propeptide — removed in mature form.

This sequence belongs to the peptidase S10 family.

It is found in the cell membrane. The enzyme catalyses Preferential release of a C-terminal arginine or lysine residue.. Its function is as follows. Extracellular serine carboxypeptidase that contributes to pathogenicity. The chain is Carboxypeptidase S1 homolog A (SCPA) from Trichophyton rubrum (Athlete's foot fungus).